Reading from the N-terminus, the 1174-residue chain is Tyrosine-protein phosphatase non-receptor type 21 (1174 aa).

An FERM domain is found at 23–308 (LVARIQLLNN…ARHKFYRLNQ (286 aa)). Polar residues predominate over residues 396-423 (SAHSTNSLNNPQPYLQPSPMSSNPSITG). The disordered stretch occupies residues 396–445 (SAHSTNSLNNPQPYLQPSPMSSNPSITGSDVMRPDYLPSHRHSAVIPPSY). Residues serine 577, serine 589, serine 590, serine 637, and serine 673 each carry the phosphoserine modification. The segment at 673–692 (SQPSVFTERTQREGPEEAEG) is disordered. Basic and acidic residues predominate over residues 681 to 692 (RTQREGPEEAEG). Phosphoserine occurs at positions 710 and 711. Disordered stretches follow at residues 711–745 (SEEE…DPPG) and 769–806 (KRMM…TSGR). A compositionally biased stretch (acidic residues) spans 712 to 722 (EEEEDEDFEEE). Residues 796–805 (MSESDLTTSG) are compositionally biased toward polar residues. A phosphoserine mark is found at serine 797, serine 799, and serine 804. In terms of domain architecture, Tyrosine-protein phosphatase spans 896-1167 (VFTEYERILK…TFVYRVLIQF (272 aa)). Residues glutamate 1067, 1108 to 1114 (CSAGVGR), and glutamine 1152 each bind substrate. Cysteine 1108 acts as the Phosphocysteine intermediate in catalysis.

The protein belongs to the protein-tyrosine phosphatase family. Non-receptor class subfamily.

The protein resides in the cytoplasm. Its subcellular location is the cytoskeleton. The catalysed reaction is O-phospho-L-tyrosyl-[protein] + H2O = L-tyrosyl-[protein] + phosphate. In Homo sapiens (Human), this protein is Tyrosine-protein phosphatase non-receptor type 21 (PTPN21).